The chain runs to 116 residues: Large ribosomal subunit protein uL24c (116 aa).

Belongs to the universal ribosomal protein uL24 family. As to quaternary structure, part of the 50S ribosomal subunit.

The protein resides in the plastid. The protein localises to the chloroplast. Functionally, one of two assembly initiator proteins, it binds directly to the 5'-end of the 23S rRNA, where it nucleates assembly of the 50S subunit. In Pyropia yezoensis (Susabi-nori), this protein is Large ribosomal subunit protein uL24c (rpl24).